We begin with the raw amino-acid sequence, 304 residues long: Fructose permease IIC component (304 aa).

Positions 1–304 (IHSADPKDPT…GIIKKPVEEK (304 aa)) constitute a PTS EIIC type-2 domain. 8 helical membrane-spanning segments follow: residues 20–40 (FIGS…FIAM), 62–82 (NAGF…VILL), 98–118 (PVLI…QFVI), 140–160 (NLVL…GGPL), 181–201 (AAIM…TTFF), 214–234 (ITCY…FAAA), 238–258 (VIPA…FFRV), and 277–297 (LLYL…LGII).

It localises to the cell membrane. In terms of biological role, the phosphoenolpyruvate-dependent sugar phosphotransferase system (PTS), a major carbohydrate active -transport system, catalyzes the phosphorylation of incoming sugar substrates concomitant with their translocation across the cell membrane. This system is involved in fructose transport. The sequence is that of Fructose permease IIC component (fruA) from Bacillus amyloliquefaciens (Bacillus velezensis).